A 360-amino-acid chain; its full sequence is Protein MGF 360-1L (360 aa).

It belongs to the asfivirus MGF 360 family.

Functionally, plays a role in virus cell tropism, and may be required for efficient virus replication in macrophages. The polypeptide is Protein MGF 360-1L (Ornithodoros (relapsing fever ticks)).